The primary structure comprises 368 residues: UDP-galactose/UDP-N-acetylglucosamine transporter srf-3 (368 aa).

Transmembrane regions (helical) follow at residues 72–92 (FVST…CLFL), 118–138 (LKVC…YVAA), 145–165 (TFMI…VIIL), 174–194 (WFAL…GTKA), 203–223 (FVGF…GIYF), 235–254 (LWMR…FSAI), 273–293 (SIVW…AVCI), and 317–337 (IFLF…LVIF).

It belongs to the nucleotide-sugar transporter family. SLC35A subfamily. Expressed exclusively in pharyngeal cells g1 and g2, lateral seam cells, spermatheca and vas deferens.

The protein resides in the golgi apparatus membrane. In terms of biological role, acts as a transporter of both UDP-galactose and UDP-N-acetylglucosamine into the Golgi lumen. Apparently transports UDP-galactose and UDP-N-acetylglucosamine simultaneously, and independently, by an unknown mechanism. Functions redundantly with nucleotide sugar transporter nstp-4. May be involved in gonadal development. The chain is UDP-galactose/UDP-N-acetylglucosamine transporter srf-3 (srf-3) from Caenorhabditis elegans.